The primary structure comprises 238 residues: MADLSIQGLCALLHLASPQLPVGGFSYSQGLEAAIEHGLVTDAGTARTWIADALAHGFARCEAPLWLLLRRAWSAGDEGAVHEWNQWFIASRDSREARAETLQMGWSLHSLLRSVPWGGEAFAPRIAQLGALVEGAGLAYPTAFACACAAVDADEDHALLAYGFAWLENQVAAAIKAVPLGQVAGQSLLLALHPLLEQAVCEARRRASEAPPRLDTMLPQWSVLQARHEHQYSRLFRS.

Belongs to the UreF family. In terms of assembly, ureD, UreF and UreG form a complex that acts as a GTP-hydrolysis-dependent molecular chaperone, activating the urease apoprotein by helping to assemble the nickel containing metallocenter of UreC. The UreE protein probably delivers the nickel.

It is found in the cytoplasm. Required for maturation of urease via the functional incorporation of the urease nickel metallocenter. This Delftia acidovorans (strain DSM 14801 / SPH-1) protein is Urease accessory protein UreF.